Reading from the N-terminus, the 500-residue chain is Probable cytosol aminopeptidase (500 aa).

Residues Lys-261 and Asp-266 each coordinate Mn(2+). The active site involves Lys-273. Positions 284, 343, and 345 each coordinate Mn(2+). The active site involves Arg-347.

The protein belongs to the peptidase M17 family. Requires Mn(2+) as cofactor.

It is found in the cytoplasm. It catalyses the reaction Release of an N-terminal amino acid, Xaa-|-Yaa-, in which Xaa is preferably Leu, but may be other amino acids including Pro although not Arg or Lys, and Yaa may be Pro. Amino acid amides and methyl esters are also readily hydrolyzed, but rates on arylamides are exceedingly low.. The enzyme catalyses Release of an N-terminal amino acid, preferentially leucine, but not glutamic or aspartic acids.. Presumably involved in the processing and regular turnover of intracellular proteins. Catalyzes the removal of unsubstituted N-terminal amino acids from various peptides. This chain is Probable cytosol aminopeptidase (pepA), found in Bacillus subtilis (strain 168).